We begin with the raw amino-acid sequence, 108 residues long: Vacuolar ATPase assembly integral membrane protein VMA21 (108 aa).

Topologically, residues Met-1–Ser-34 are cytoplasmic. A helical transmembrane segment spans residues Val-35–Phe-55. Residues Gly-56 to Tyr-68 lie on the Lumenal side of the membrane. A helical membrane pass occupies residues Ala-69 to Ala-89. The Cytoplasmic portion of the chain corresponds to Arg-90–Glu-108.

The protein belongs to the VMA21 family.

It is found in the endoplasmic reticulum membrane. The protein localises to the endoplasmic reticulum-Golgi intermediate compartment membrane. Its subcellular location is the cytoplasmic vesicle. It localises to the COPII-coated vesicle membrane. Its function is as follows. Required for the assembly of the V0 complex of the vacuolar ATPase (V-ATPase) in the endoplasmic reticulum. In Ajellomyces capsulatus (strain NAm1 / WU24) (Darling's disease fungus), this protein is Vacuolar ATPase assembly integral membrane protein VMA21.